The chain runs to 293 residues: Ethanolamine ammonia-lyase small subunit (293 aa).

Residues Val-207 and Glu-228 each coordinate adenosylcob(III)alamin.

This sequence belongs to the EutC family. In terms of assembly, the basic unit is a heterodimer which dimerizes to form tetramers. The heterotetramers trimerize; 6 large subunits form a core ring with 6 small subunits projecting outwards. Adenosylcob(III)alamin is required as a cofactor.

Its subcellular location is the bacterial microcompartment. It carries out the reaction ethanolamine = acetaldehyde + NH4(+). The protein operates within amine and polyamine degradation; ethanolamine degradation. Catalyzes the deamination of various vicinal amino-alcohols to oxo compounds. Allows this organism to utilize ethanolamine as the sole source of nitrogen and carbon in the presence of external vitamin B12. The chain is Ethanolamine ammonia-lyase small subunit from Listeria innocua serovar 6a (strain ATCC BAA-680 / CLIP 11262).